A 330-amino-acid chain; its full sequence is Protein ANTHESIS POMOTING FACTOR 1 (330 aa).

WD repeat units lie at residues 22–61 (DFGG…QLKI), 112–151 (GHKD…CQGI), 153–191 (HLRG…KGPF), 198–237 (GDTA…KKCG), 242–281 (PSQG…EVAR), and 284–323 (NNIG…APAD).

The protein belongs to the WD repeat SWD2 family. As to expression, expressed in the shoot apical meristem (SAM), embryos, seedlings, cotyledons, leaves primordia, young leaves and roots.

It is found in the nucleus. Component of a chromatin regulatory complex involved in regulating chromatin structure in the nucleus. Promotes flowering under long days (LD) via the regulation of bolting. The sequence is that of Protein ANTHESIS POMOTING FACTOR 1 from Arabidopsis thaliana (Mouse-ear cress).